The primary structure comprises 175 residues: NADH-ubiquinone oxidoreductase chain 6 (175 aa).

5 helical membrane passes run 1 to 21 (MMYMVFLLSVAFVISFIGFSS), 26 to 46 (IYGGLGLIVGGGVGCGIVMGL), 47 to 67 (GGSFLGLMVFLVYLGGMLVVF), 87 to 107 (VILSALFVGLLVEVAMIVWMI), and 152 to 172 (WLVILAGWSLFVSIFIVIEIT).

This sequence belongs to the complex I subunit 6 family.

The protein resides in the mitochondrion membrane. It catalyses the reaction a ubiquinone + NADH + 5 H(+)(in) = a ubiquinol + NAD(+) + 4 H(+)(out). Its function is as follows. Core subunit of the mitochondrial membrane respiratory chain NADH dehydrogenase (Complex I) that is believed to belong to the minimal assembly required for catalysis. Complex I functions in the transfer of electrons from NADH to the respiratory chain. The immediate electron acceptor for the enzyme is believed to be ubiquinone. This chain is NADH-ubiquinone oxidoreductase chain 6 (MT-ND6), found in Dasypus novemcinctus (Nine-banded armadillo).